The chain runs to 638 residues: E3 ubiquitin-protein ligase TRIM47 (638 aa).

Residue M1 is modified to N-acetylmethionine. Residues 9-58 form an RING-type zinc finger; sequence CPICLEPLREPVTLPCGHNFCLACLGALWPHRGASGAGGPGGAARCPLCQ. T72 bears the Phosphothreonine mark. Residues 79 to 119 are disordered; sequence LRQGSGPGSGPGPAPALAPEPSAPSALPSVPEPSAPCAPEP. 2 stretches are compositionally biased toward pro residues: residues 88-100 and 108-119; these read GPGP…PEPS and VPEPSAPCAPEP. The B box-type zinc finger occupies 177–217; it reads LEESLCPRHLRPLERYCRAERVCLCEACAAQEHRGHELVPL. C182, H185, C204, and H209 together coordinate Zn(2+). Residues 296-324 adopt a coiled-coil conformation; the sequence is MLGRSQGDLRRQEEQRSRLSRARQNLSQV. Disordered stretches follow at residues 300-322 and 384-411; these read SQGD…QNLS and LRGP…LEST. The segment covering 302–312 has biased composition (basic and acidic residues); the sequence is GDLRRQEEQRS. A B30.2/SPRY domain is found at 410–631; it reads STNLLESEAP…LQIGPLKKSC (222 aa). S461 is modified (phosphoserine). The residue at position 582 (R582) is an Omega-N-methylarginine. A Phosphoserine modification is found at S588.

This sequence belongs to the TRIM/RBCC family. In terms of tissue distribution, low expression in most tissues. Higher expression in kidney tubular cells. Overexpressed in astrocytoma tumor cells.

Its subcellular location is the cytoplasm. The protein resides in the nucleus. It carries out the reaction S-ubiquitinyl-[E2 ubiquitin-conjugating enzyme]-L-cysteine + [acceptor protein]-L-lysine = [E2 ubiquitin-conjugating enzyme]-L-cysteine + N(6)-ubiquitinyl-[acceptor protein]-L-lysine.. The protein operates within protein modification; protein ubiquitination. Its function is as follows. E3 ubiquitin-protein ligase that mediates the ubiquitination and proteasomal degradation of CYLD. The chain is E3 ubiquitin-protein ligase TRIM47 from Homo sapiens (Human).